Here is a 206-residue protein sequence, read N- to C-terminus: RNA pyrophosphohydrolase (206 aa).

A Nudix hydrolase domain is found at 6 to 150; that stretch reads GYRPNVGIVI…KRDVYRKVMK (145 aa). Residues 38-59 carry the Nudix box motif; that stretch reads GGINEGENIETAMYRELYEEVG. The segment covering 162–191 has biased composition (basic and acidic residues); the sequence is KPETVEKPRVERTEKRDFQKRDNQKREFRK. Residues 162–206 form a disordered region; that stretch reads KPETVEKPRVERTEKRDFQKRDNQKREFRKSARTWNNSHQKGKAQ.

Belongs to the Nudix hydrolase family. RppH subfamily. A divalent metal cation is required as a cofactor.

Its function is as follows. Accelerates the degradation of transcripts by removing pyrophosphate from the 5'-end of triphosphorylated RNA, leading to a more labile monophosphorylated state that can stimulate subsequent ribonuclease cleavage. In Actinobacillus pleuropneumoniae serotype 3 (strain JL03), this protein is RNA pyrophosphohydrolase.